A 429-amino-acid polypeptide reads, in one-letter code: Enolase (429 aa).

Gln163 provides a ligand contact to (2R)-2-phosphoglycerate. The active-site Proton donor is Glu205. Asp242, Glu285, and Asp312 together coordinate Mg(2+). The (2R)-2-phosphoglycerate site is built by Lys337, Arg366, Ser367, and Lys388. Lys337 serves as the catalytic Proton acceptor.

Belongs to the enolase family. In terms of assembly, component of the RNA degradosome, a multiprotein complex involved in RNA processing and mRNA degradation. Requires Mg(2+) as cofactor.

It localises to the cytoplasm. It is found in the secreted. The protein resides in the cell surface. It carries out the reaction (2R)-2-phosphoglycerate = phosphoenolpyruvate + H2O. Its pathway is carbohydrate degradation; glycolysis; pyruvate from D-glyceraldehyde 3-phosphate: step 4/5. In terms of biological role, catalyzes the reversible conversion of 2-phosphoglycerate (2-PG) into phosphoenolpyruvate (PEP). It is essential for the degradation of carbohydrates via glycolysis. The polypeptide is Enolase (Alkalilimnicola ehrlichii (strain ATCC BAA-1101 / DSM 17681 / MLHE-1)).